The chain runs to 131 residues: Cytochrome c-552 (131 aa).

Residues Cys-11, Cys-14, His-15, and Met-69 each contribute to the heme c site.

In terms of processing, binds 1 heme c group covalently per subunit.

Functionally, this monoheme basic protein appears to function as an electron donor to cytochrome oxidase in T.thermophilus. This is Cytochrome c-552 (cycA) from Thermus thermophilus.